The chain runs to 223 residues: uncharacterized protein (223 aa).

Transmembrane regions (helical) follow at residues 22–42 (LTVG…FVVV), 59–79 (GVAL…ATLI), 85–105 (IFSL…WCSM), and 164–184 (MAWA…SQAF).

Belongs to the Rht family.

Its subcellular location is the cell membrane. This is an uncharacterized protein from Escherichia coli (strain K12).